Reading from the N-terminus, the 576-residue chain is D-lactate dehydrogenase [cytochrome], mitochondrial (576 aa).

Residues 139 to 320 (EANQRPEIVL…TEATIKCHVR (182 aa)) enclose the FAD-binding PCMH-type domain.

It belongs to the FAD-binding oxidoreductase/transferase type 4 family. The cofactor is FAD. Zn(2+) serves as cofactor.

Its subcellular location is the mitochondrion matrix. It carries out the reaction (R)-lactate + 2 Fe(III)-[cytochrome c] = 2 Fe(II)-[cytochrome c] + pyruvate + 2 H(+). In terms of biological role, catalyzes the stereospecific oxidation of D-lactate to pyruvate. This Kluyveromyces lactis (strain ATCC 8585 / CBS 2359 / DSM 70799 / NBRC 1267 / NRRL Y-1140 / WM37) (Yeast) protein is D-lactate dehydrogenase [cytochrome], mitochondrial (DLD1).